A 1004-amino-acid polypeptide reads, in one-letter code: Glycine dehydrogenase (decarboxylating), mitochondrial (1004 aa).

The residue at position 738 (lysine 738) is an N6-(pyridoxal phosphate)lysine.

This sequence belongs to the GcvP family. Homodimer. Interacts with GCSH. The glycine cleavage system is composed of four proteins: P (GLDC), T (GCST), L (DLD) and H (GCSH). Pyridoxal 5'-phosphate is required as a cofactor. In terms of tissue distribution, liver (at protein level).

Its subcellular location is the mitochondrion. The enzyme catalyses N(6)-[(R)-lipoyl]-L-lysyl-[glycine-cleavage complex H protein] + glycine + H(+) = N(6)-[(R)-S(8)-aminomethyldihydrolipoyl]-L-lysyl-[glycine-cleavage complex H protein] + CO2. Stimulated by lipoic acid. Inhibited in presence of methylamine. Its function is as follows. The glycine cleavage system catalyzes the degradation of glycine. The P protein (GLDC) binds the alpha-amino group of glycine through its pyridoxal phosphate cofactor; CO(2) is released and the remaining methylamine moiety is then transferred to the lipoamide cofactor of the H protein (GCSH). This chain is Glycine dehydrogenase (decarboxylating), mitochondrial, found in Gallus gallus (Chicken).